Consider the following 95-residue polypeptide: Protein TusB (95 aa).

The protein belongs to the DsrH/TusB family. In terms of assembly, heterohexamer, formed by a dimer of trimers. The hexameric TusBCD complex contains 2 copies each of TusB, TusC and TusD. The TusBCD complex interacts with TusE.

Its subcellular location is the cytoplasm. Its function is as follows. Part of a sulfur-relay system required for 2-thiolation of 5-methylaminomethyl-2-thiouridine (mnm(5)s(2)U) at tRNA wobble positions. This is Protein TusB from Escherichia coli O157:H7.